The following is a 412-amino-acid chain: MKMHLQRALVVLALLNLATVSLSLSTCTTLDFGHIKKKRVEAIRGQILSKLRLTSPPEPSVMTHVPYQVLALYNSTRELLEEMHGEREEGCTQETSESEYYAKEIHKFDMIQGLAEHNELAVCPKGITSKVFRFNVSSVEKNGTNLFRAEFRVLRVPNPSSKRTEQRIELFQILRPDEHIAKQRYIGGKNLPTRGTAEWLSFDVTDTVREWLLRRESNLGLEISIHCPCHTFQPNGDILENVHEVMEIKFKGVDNEDDHGRGDLGRLKKQKDHHNPHLILMMIPPHRLDSPGQGGQRKKRALDTNYCFRNLEENCCVRPLYIDFRQDLGWKWVHEPKGYYANFCSGPCPYLRSSDTTHSTVLGLYNTLNPEASASPCCVPQDLEPLTILYYVGRTPKVEQLSNMVVKSCKCS.

The N-terminal stretch at 1-23 is a signal peptide; that stretch reads MKMHLQRALVVLALLNLATVSLS. Residues N74, N135, and N142 are each glycosylated (N-linked (GlcNAc...) asparagine). The short motif at 261–263 is the Cell attachment site element; sequence RGD. Q293 bears the N5-methylglutamine mark. 4 disulfides stabilise this stretch: C307/C316, C315/C378, C344/C409, and C348/C411.

The protein belongs to the TGF-beta family. Interacts with ASPN. Latency-associated peptide: Homodimer; disulfide-linked. Latency-associated peptide: Interacts with Transforming growth factor beta-3 (TGF-beta-3) chain; interaction is non-covalent and maintains (TGF-beta-3) in a latent state. Latency-associated peptide: Interacts with LRRC32/GARP; leading to regulate activation of TGF-beta-3 and promote epithelial fusion during palate development. Latency-associated peptide: Interacts (via cell attachment site) with integrins, leading to release of the active TGF-beta-3. Transforming growth factor beta-3: Homodimer; disulfide-linked. Transforming growth factor beta-3: Interacts with TGF-beta receptors (TGFBR1 and TGFBR2), leading to signal transduction. Post-translationally, transforming growth factor beta-3 proprotein: The precursor proprotein is cleaved in the Golgi apparatus to form Transforming growth factor beta-3 (TGF-beta-3) and Latency-associated peptide (LAP) chains, which remain non-covalently linked, rendering TGF-beta-3 inactive. In terms of processing, methylated at Gln-293 by N6AMT1. As to expression, expressed in cardiomyocytes.

The protein localises to the secreted. Its subcellular location is the extracellular space. It is found in the extracellular matrix. Transforming growth factor beta-3 proprotein: Precursor of the Latency-associated peptide (LAP) and Transforming growth factor beta-3 (TGF-beta-3) chains, which constitute the regulatory and active subunit of TGF-beta-3, respectively. Its function is as follows. Required to maintain the Transforming growth factor beta-3 (TGF-beta-3) chain in a latent state during storage in extracellular matrix. Associates non-covalently with TGF-beta-3 and regulates its activation via interaction with 'milieu molecules', such as LTBP1 and LRRC32/GARP, that control activation of TGF-beta-3. Interaction with integrins results in distortion of the Latency-associated peptide chain and subsequent release of the active TGF-beta-3. Functionally, transforming growth factor beta-3: Multifunctional protein that regulates embryogenesis and cell differentiation and is required in various processes such as secondary palate development. Activation into mature form follows different steps: following cleavage of the proprotein in the Golgi apparatus, Latency-associated peptide (LAP) and Transforming growth factor beta-3 (TGF-beta-3) chains remain non-covalently linked rendering TGF-beta-3 inactive during storage in extracellular matrix. At the same time, LAP chain interacts with 'milieu molecules', such as LTBP1 and LRRC32/GARP that control activation of TGF-beta-3 and maintain it in a latent state during storage in extracellular milieus. TGF-beta-3 is released from LAP by integrins: integrin-binding results in distortion of the LAP chain and subsequent release of the active TGF-beta-3. Once activated following release of LAP, TGF-beta-3 acts by binding to TGF-beta receptors (TGFBR1 and TGFBR2), which transduce signal. The polypeptide is Transforming growth factor beta-3 proprotein (Tgfb3) (Rattus norvegicus (Rat)).